A 363-amino-acid chain; its full sequence is tRNA N6-adenosine threonylcarbamoyltransferase (363 aa).

2 residues coordinate Fe cation: H127 and H131. Substrate-binding positions include 150–154, D183, G196, and N290; that span reads LISGG. Position 318 (D318) interacts with Fe cation.

It belongs to the KAE1 / TsaD family. The cofactor is Fe(2+).

The protein localises to the cytoplasm. It catalyses the reaction L-threonylcarbamoyladenylate + adenosine(37) in tRNA = N(6)-L-threonylcarbamoyladenosine(37) in tRNA + AMP + H(+). In terms of biological role, required for the formation of a threonylcarbamoyl group on adenosine at position 37 (t(6)A37) in tRNAs that read codons beginning with adenine. Is involved in the transfer of the threonylcarbamoyl moiety of threonylcarbamoyl-AMP (TC-AMP) to the N6 group of A37, together with TsaE and TsaB. TsaD likely plays a direct catalytic role in this reaction. This Zymomonas mobilis subsp. mobilis (strain ATCC 31821 / ZM4 / CP4) protein is tRNA N6-adenosine threonylcarbamoyltransferase.